A 330-amino-acid polypeptide reads, in one-letter code: Ferredoxin--NADP reductase (330 aa).

Residues glutamate 35, glutamine 43, tyrosine 48, valine 90, phenylalanine 123, aspartate 285, and threonine 326 each coordinate FAD.

This sequence belongs to the ferredoxin--NADP reductase type 2 family. In terms of assembly, homodimer. Requires FAD as cofactor.

It carries out the reaction 2 reduced [2Fe-2S]-[ferredoxin] + NADP(+) + H(+) = 2 oxidized [2Fe-2S]-[ferredoxin] + NADPH. The polypeptide is Ferredoxin--NADP reductase (Streptococcus pyogenes serotype M28 (strain MGAS6180)).